A 399-amino-acid chain; its full sequence is Rho GTPase-activating protein gacC (399 aa).

The span at 1-13 shows a compositional bias: basic and acidic residues; sequence MESKDQNVYRKGS. The disordered stretch occupies residues 1-80; sequence MESKDQNVYR…SSSTSTTPVK (80 aa). Residues 14 to 31 show a composition bias toward polar residues; the sequence is DNFSKGSNTFFGNLKSIS. Residues 61-79 are compositionally biased toward low complexity; sequence SVDSSSSNPSSSSTSTTPV. The region spanning 186–375 is the Rho-GAP domain; it reads VELEESFKTA…NLISFFQQIF (190 aa).

The protein localises to the cytoplasm. In terms of biological role, rho GTPase-activating protein involved in the signal transduction pathway. This Dictyostelium discoideum (Social amoeba) protein is Rho GTPase-activating protein gacC (gacC).